The sequence spans 569 residues: Urease subunit alpha (569 aa).

Residues 131-569 (GGIDTHIHFI…LPLAQRYLLL (439 aa)) enclose the Urease domain. Ni(2+) is bound by residues histidine 136, histidine 138, and lysine 219. Lysine 219 is subject to N6-carboxylysine. Histidine 221 provides a ligand contact to substrate. 2 residues coordinate Ni(2+): histidine 248 and histidine 274. The active-site Proton donor is histidine 322. Aspartate 362 contributes to the Ni(2+) binding site.

The protein belongs to the metallo-dependent hydrolases superfamily. Urease alpha subunit family. As to quaternary structure, heterotrimer of UreA (gamma), UreB (beta) and UreC (alpha) subunits. Three heterotrimers associate to form the active enzyme. It depends on Ni cation as a cofactor. Carboxylation allows a single lysine to coordinate two nickel ions.

Its subcellular location is the cytoplasm. It catalyses the reaction urea + 2 H2O + H(+) = hydrogencarbonate + 2 NH4(+). The protein operates within nitrogen metabolism; urea degradation; CO(2) and NH(3) from urea (urease route): step 1/1. The polypeptide is Urease subunit alpha (Synechococcus sp. (strain CC9605)).